The chain runs to 230 residues: NAD(P)H-hydrate epimerase (230 aa).

Positions 11–218 (AIDVDQELFT…ALQRKYGLNL (208 aa)) constitute a YjeF N-terminal domain. 61–65 (NNGGD) provides a ligand contact to (6S)-NADPHX. Residues Asn-62 and Asp-126 each coordinate K(+). (6S)-NADPHX contacts are provided by residues 130–136 (GFSFKPP) and Asp-159. Ser-162 is a binding site for K(+).

It belongs to the NnrE/AIBP family. Requires K(+) as cofactor.

The enzyme catalyses (6R)-NADHX = (6S)-NADHX. It catalyses the reaction (6R)-NADPHX = (6S)-NADPHX. In terms of biological role, catalyzes the epimerization of the S- and R-forms of NAD(P)HX, a damaged form of NAD(P)H that is a result of enzymatic or heat-dependent hydration. This is a prerequisite for the S-specific NAD(P)H-hydrate dehydratase to allow the repair of both epimers of NAD(P)HX. The polypeptide is NAD(P)H-hydrate epimerase (Drosophila yakuba (Fruit fly)).